The following is a 116-amino-acid chain: Aspartate 1-decarboxylase (116 aa).

Ser-25 (schiff-base intermediate with substrate; via pyruvic acid) is an active-site residue. At Ser-25 the chain carries Pyruvic acid (Ser). Thr-57 provides a ligand contact to substrate. Catalysis depends on Tyr-58, which acts as the Proton donor. 73–75 (GAA) lines the substrate pocket.

It belongs to the PanD family. Heterooctamer of four alpha and four beta subunits. Requires pyruvate as cofactor. Post-translationally, is synthesized initially as an inactive proenzyme, which is activated by self-cleavage at a specific serine bond to produce a beta-subunit with a hydroxyl group at its C-terminus and an alpha-subunit with a pyruvoyl group at its N-terminus.

The protein localises to the cytoplasm. It carries out the reaction L-aspartate + H(+) = beta-alanine + CO2. The protein operates within cofactor biosynthesis; (R)-pantothenate biosynthesis; beta-alanine from L-aspartate: step 1/1. Functionally, catalyzes the pyruvoyl-dependent decarboxylation of aspartate to produce beta-alanine. The polypeptide is Aspartate 1-decarboxylase (Leptospira interrogans serogroup Icterohaemorrhagiae serovar copenhageni (strain Fiocruz L1-130)).